Consider the following 166-residue polypeptide: Cofilin-2 (166 aa).

The ADF-H domain maps to 4–153 (GVTVNDEVIK…KDRSTLGEKL (150 aa)). Serine 24 is subject to Phosphoserine. The Nuclear localization signal signature appears at 30 to 34 (KKRKK).

It belongs to the actin-binding proteins ADF family. In terms of processing, the phosphorylation of Ser-24 may prevent recognition of the nuclear localization signal. As to expression, widely distributed in various tissues.

It is found in the nucleus matrix. Its subcellular location is the cytoplasm. The protein resides in the cytoskeleton. Its function is as follows. Controls reversibly actin polymerization and depolymerization in a pH-sensitive manner. It has the ability to bind G- and F-actin in a 1:1 ratio of cofilin to actin. It is the major component of intranuclear and cytoplasmic actin rods. The protein is Cofilin-2 (CFL2) of Gallus gallus (Chicken).